The following is a 528-amino-acid chain: UDP-glucuronosyltransferase 2A1 (528 aa).

The signal sequence occupies residues 1–21; that stretch reads MLKNILLCSLQISLLGMSLGG. At 22–494 the chain is on the extracellular side; sequence NVLIWPMEGS…FQYHSLDVIG (473 aa). The N-linked (GlcNAc...) asparagine glycan is linked to Asn-49. Lys-135 carries the N6-succinyllysine modification. The N-linked (GlcNAc...) asparagine glycan is linked to Asn-314. Residues 495-515 form a helical membrane-spanning segment; that stretch reads FLLACVASAILLVAKCCLFIF. Topologically, residues 516–528 are cytoplasmic; it reads QKVGKTGKKKKRD.

The protein belongs to the UDP-glycosyltransferase family.

The protein localises to the membrane. The catalysed reaction is glucuronate acceptor + UDP-alpha-D-glucuronate = acceptor beta-D-glucuronoside + UDP + H(+). It carries out the reaction 16beta,17beta-estriol + UDP-alpha-D-glucuronate = 16beta,17beta-estriol 16-O-(beta-D-glucuronate) + UDP + H(+). It catalyses the reaction 16alpha,17alpha-estriol + UDP-alpha-D-glucuronate = 16alpha,17alpha-estriol 16-O-(beta-D-glucuronate) + UDP + H(+). The enzyme catalyses 17alpha-estradiol + UDP-alpha-D-glucuronate = 17alpha-estradiol 17-O-(beta-D-glucuronate) + UDP + H(+). The catalysed reaction is 17alpha-estradiol + UDP-alpha-D-glucuronate = 17alpha-estradiol 3-O-(beta-D-glucuronate) + UDP + H(+). It carries out the reaction 17beta-estradiol + UDP-alpha-D-glucuronate = 17beta-estradiol 3-O-(beta-D-glucuronate) + UDP + H(+). It catalyses the reaction 17beta-estradiol + UDP-alpha-D-glucuronate = 17beta-estradiol 17-O-(beta-D-glucuronate) + UDP + H(+). The enzyme catalyses testosterone + UDP-alpha-D-glucuronate = testosterone 17-O-(beta-D-glucuronate) + UDP + H(+). The catalysed reaction is epitestosterone + UDP-alpha-D-glucuronate = epitestosterone 17-O-(beta-D-glucuronate) + UDP + H(+). It carries out the reaction lithocholate + UDP-alpha-D-glucuronate = lithocholoyl-3-O-(beta-D-glucuronate) + UDP + H(+). It catalyses the reaction lithocholate + UDP-alpha-D-glucuronate = lithocholoyl-24-O-(beta-D-glucuronate) + UDP. The enzyme catalyses deoxycholate + UDP-alpha-D-glucuronate = deoxycholoyl-24-O-(beta-D-glucuronate) + UDP. The catalysed reaction is hyodeoxycholate + UDP-alpha-D-glucuronate = hyodeoxycholate 6-O-(beta-D-glucuronate) + UDP + H(+). It carries out the reaction hyocholate + UDP-alpha-D-glucuronate = hyocholoyl-24-O-(beta-D-glucuronate) + UDP. UDP-glucuronosyltransferase (UGT) that catalyzes phase II biotransformation reactions in which lipophilic substrates are conjugated with glucuronic acid to increase the metabolite's water solubility, thereby facilitating excretion into either the urine or bile. Essential for the elimination and detoxification of drugs, xenobiotics and endogenous compounds. Catalyzes the glucuronidation of endogenous steroid hormones such as androgens (testosterones) and estrogens (estradiol and estriol). Contributes to bile acid (BA) detoxification by catalyzing the glucuronidation of BA substrates, which are natural detergents for dietary lipids absorption. Shows a high affinity to aliphatic odorants such as citronellol as well as olfactory tissue specificity, and therefore may be involved in olfaction. This Mus musculus (Mouse) protein is UDP-glucuronosyltransferase 2A1.